The following is a 447-amino-acid chain: Phosphoglucosamine mutase (447 aa).

Ser100 serves as the catalytic Phosphoserine intermediate. Mg(2+) contacts are provided by Ser100, Asp239, Asp241, and Asp243. Position 100 is a phosphoserine (Ser100).

This sequence belongs to the phosphohexose mutase family. Mg(2+) is required as a cofactor. In terms of processing, activated by phosphorylation.

It catalyses the reaction alpha-D-glucosamine 1-phosphate = D-glucosamine 6-phosphate. In terms of biological role, catalyzes the conversion of glucosamine-6-phosphate to glucosamine-1-phosphate. This chain is Phosphoglucosamine mutase, found in Thermoanaerobacter pseudethanolicus (strain ATCC 33223 / 39E) (Clostridium thermohydrosulfuricum).